A 214-amino-acid chain; its full sequence is UBX domain-containing protein 10 (214 aa).

Basic residues predominate over residues 1–13 (MHVTRPKSSKGRS). The tract at residues 1 to 79 (MHVTRPKSSK…AYDRPPEEPV (79 aa)) is disordered. A compositionally biased stretch (polar residues) spans 16 to 25 (MITNSSMIYT). The segment covering 49–60 (SLRSRAILRRSS) has biased composition (low complexity). Residues 127–204 (PEESDLLLAI…GVLNKSVLCI (78 aa)) enclose the UBX domain.

The protein belongs to the UBXN10 family.

It is found in the cell projection. The protein resides in the cilium. Required for ciliogenesis. Acts as a tethering factor that facilitates recruitment of vcp/p97 to the intraflagellar transport complex B (IFT-B) in cilia. The sequence is that of UBX domain-containing protein 10 from Danio rerio (Zebrafish).